Here is a 2763-residue protein sequence, read N- to C-terminus: Large tegument protein deneddylase (2763 aa).

The deubiquitination activity stretch occupies residues 1 to 247; sequence MDIIPPIAVT…CDTYFTDEQY (247 aa). The Peptidase C76 domain maps to 12–237; sequence AGVGSRNQFD…SSAVTLIYGS (226 aa). Residues cysteine 32, aspartate 168, and histidine 170 contribute to the active site. Residues 495 to 523 form an interaction with inner tegument protein region; that stretch reads LELFINLTILRLTGFVVENGTRTHHGATS. The segment at 2456-2476 is disordered; it reads VRPAQPAQPAQPAQPAQTVQP. 5 repeat units span residues 2458–2460, 2461–2463, 2464–2466, 2467–2469, and 2470–2472. Positions 2458-2472 are 5 X 3 AA repeats of P-A-Q; the sequence is PAQPAQPAQPAQPAQ. Residues 2459 to 2476 are compositionally biased toward low complexity; the sequence is AQPAQPAQPAQPAQTVQP.

This sequence belongs to the herpesviridae large tegument protein family. Interacts with host CUL1 and CUL4A; these interactions inhibit the E3 ligase activity of cullins. Interacts with inner tegument protein. Interacts with capsid vertex specific component CVC2. Interacts with the major capsid protein/MCP.

It is found in the virion tegument. The protein localises to the host cytoplasm. It localises to the host nucleus. It carries out the reaction Thiol-dependent hydrolysis of ester, thioester, amide, peptide and isopeptide bonds formed by the C-terminal Gly of ubiquitin (a 76-residue protein attached to proteins as an intracellular targeting signal).. Large tegument protein that plays multiple roles in the viral cycle. During viral entry, remains associated with the capsid while most of the tegument is detached and participates in the capsid transport toward the host nucleus. Plays a role in the routing of the capsid at the nuclear pore complex and subsequent uncoating. Within the host nucleus, acts as a deneddylase and promotes the degradation of nuclear CRLs (cullin-RING ubiquitin ligases) and thereby stabilizes nuclear CRL substrates, while cytoplasmic CRLs remain unaffected. These modifications prevent host cell cycle S-phase progression and create a favorable environment allowing efficient viral genome replication. Participates later in the secondary envelopment of capsids. Indeed, plays a linker role for the association of the outer viral tegument to the capsids together with the inner tegument protein. In Homo sapiens (Human), this protein is Large tegument protein deneddylase.